The chain runs to 385 residues: 8-amino-7-oxononanoate synthase (385 aa).

Arg-21 contacts substrate. 108-109 (GF) serves as a coordination point for pyridoxal 5'-phosphate. Residue His-133 coordinates substrate. The pyridoxal 5'-phosphate site is built by Ser-179, His-207, and Thr-233. Position 236 is an N6-(pyridoxal phosphate)lysine (Lys-236). Thr-352 provides a ligand contact to substrate.

The protein belongs to the class-II pyridoxal-phosphate-dependent aminotransferase family. BioF subfamily. Homodimer. It depends on pyridoxal 5'-phosphate as a cofactor.

The catalysed reaction is 6-carboxyhexanoyl-[ACP] + L-alanine + H(+) = (8S)-8-amino-7-oxononanoate + holo-[ACP] + CO2. Its pathway is cofactor biosynthesis; biotin biosynthesis. Functionally, catalyzes the decarboxylative condensation of pimeloyl-[acyl-carrier protein] and L-alanine to produce 8-amino-7-oxononanoate (AON), [acyl-carrier protein], and carbon dioxide. This is 8-amino-7-oxononanoate synthase from Pseudescherichia vulneris (Escherichia vulneris).